We begin with the raw amino-acid sequence, 654 residues long: Macrolide export ATP-binding/permease protein MacB (654 aa).

The 239-residue stretch at 6–244 (IELRGLRREF…RAGDAPTRQP (239 aa)) folds into the ABC transporter domain. Residue 42-49 (GASGSGKS) participates in ATP binding. The next 4 membrane-spanning stretches (helical) occupy residues 278 to 298 (FLTM…VAVG), 527 to 547 (LTLM…IGVM), 584 to 604 (VVCL…AALF), and 619 to 639 (SIAA…YLPA).

This sequence belongs to the ABC transporter superfamily. Macrolide exporter (TC 3.A.1.122) family. As to quaternary structure, homodimer.

The protein resides in the cell inner membrane. Non-canonical ABC transporter that contains transmembrane domains (TMD), which form a pore in the inner membrane, and an ATP-binding domain (NBD), which is responsible for energy generation. Confers resistance against macrolides. The sequence is that of Macrolide export ATP-binding/permease protein MacB from Rhodopseudomonas palustris (strain HaA2).